The chain runs to 318 residues: NADH-ubiquinone oxidoreductase chain 1 (318 aa).

A run of 8 helical transmembrane segments spans residues 2–22, 70–90, 100–120, 140–160, 172–192, 217–237, 253–273, and 294–314; these read FLVNLLLMIIPILLAVAFLTL, MFIMAPILALSLALTMWTPLP, LGVLFILAMSSLAVYSILWSG, ISYEVTLAIILLSVLLMSGSF, LWLIIPAWPLAMMWFISTLAE, GGSFALFFLAEYANIIMMNAI, EFYTTSFMIKTLLMTITFLWI, and LPLTLALCMWHVSIPILTASI.

The protein belongs to the complex I subunit 1 family. Core subunit of respiratory chain NADH dehydrogenase (Complex I) which is composed of 45 different subunits.

It is found in the mitochondrion inner membrane. It carries out the reaction a ubiquinone + NADH + 5 H(+)(in) = a ubiquinol + NAD(+) + 4 H(+)(out). In terms of biological role, core subunit of the mitochondrial membrane respiratory chain NADH dehydrogenase (Complex I) which catalyzes electron transfer from NADH through the respiratory chain, using ubiquinone as an electron acceptor. Essential for the catalytic activity and assembly of complex I. This is NADH-ubiquinone oxidoreductase chain 1 (MT-ND1) from Emballonura alecto (Philippine sheath-tailed bat).